The chain runs to 368 residues: Protein trichome birefringence-like 43 (368 aa).

The chain crosses the membrane as a helical; Signal-anchor for type II membrane protein span at residues Gly9–Ile25. The GDS motif motif lies at Gly117–Ser119. Residues Asp344–Asn358 carry the DCXHWCLPGXXDXWN motif motif.

This sequence belongs to the PC-esterase family. TBL subfamily.

Its subcellular location is the membrane. Functionally, may act as a bridging protein that binds pectin and other cell wall polysaccharides. Probably involved in maintaining esterification of pectins. May be involved in the specific O-acetylation of cell wall polymers. The chain is Protein trichome birefringence-like 43 (TBL43) from Arabidopsis thaliana (Mouse-ear cress).